Reading from the N-terminus, the 408-residue chain is LL-diaminopimelate aminotransferase (408 aa).

Tyr-15 and Gly-42 together coordinate substrate. Residues Tyr-72, 108-109, Tyr-132, Asn-187, Tyr-218, and 246-248 each bind pyridoxal 5'-phosphate; these read SK and SFS. Positions 109, 132, and 187 each coordinate substrate. Lys-249 is modified (N6-(pyridoxal phosphate)lysine). Positions 257 and 292 each coordinate pyridoxal 5'-phosphate. The substrate site is built by Asn-292 and Arg-388.

It belongs to the class-I pyridoxal-phosphate-dependent aminotransferase family. LL-diaminopimelate aminotransferase subfamily. As to quaternary structure, homodimer. Pyridoxal 5'-phosphate is required as a cofactor.

It catalyses the reaction (2S,6S)-2,6-diaminopimelate + 2-oxoglutarate = (S)-2,3,4,5-tetrahydrodipicolinate + L-glutamate + H2O + H(+). The protein operates within amino-acid biosynthesis; L-lysine biosynthesis via DAP pathway; LL-2,6-diaminopimelate from (S)-tetrahydrodipicolinate (aminotransferase route): step 1/1. Functionally, involved in the synthesis of meso-diaminopimelate (m-DAP or DL-DAP), required for both lysine and peptidoglycan biosynthesis. Catalyzes the direct conversion of tetrahydrodipicolinate to LL-diaminopimelate. Is also able to catalyze the reverse reaction in vitro, i.e. the transamination of LL-diaminopimelate with 2-oxoglutarate to produce tetrahydrodipicolinate and glutamate. Cannot use m-DAP, lysine or ornithine as the amino-group donor, when using 2-oxoglutarate as the amino-group acceptor. Cannot use pyruvate, indole 3-pyruvate, oxaloacetate or phenyl pyruvate as the amino-group acceptor, when using LL-DAP as the amino-group donor. The protein is LL-diaminopimelate aminotransferase of Leptospira interrogans serogroup Icterohaemorrhagiae serovar copenhageni (strain Fiocruz L1-130).